Reading from the N-terminus, the 156-residue chain is S-ribosylhomocysteine lyase (156 aa).

Positions 56, 60, and 123 each coordinate Fe cation.

The protein belongs to the LuxS family. Homodimer. It depends on Fe cation as a cofactor.

It catalyses the reaction S-(5-deoxy-D-ribos-5-yl)-L-homocysteine = (S)-4,5-dihydroxypentane-2,3-dione + L-homocysteine. Involved in the synthesis of autoinducer 2 (AI-2) which is secreted by bacteria and is used to communicate both the cell density and the metabolic potential of the environment. The regulation of gene expression in response to changes in cell density is called quorum sensing. Catalyzes the transformation of S-ribosylhomocysteine (RHC) to homocysteine (HC) and 4,5-dihydroxy-2,3-pentadione (DPD). The chain is S-ribosylhomocysteine lyase from Staphylococcus aureus (strain bovine RF122 / ET3-1).